We begin with the raw amino-acid sequence, 195 residues long: Cytochrome c biogenesis ATP-binding export protein CcmA (195 aa).

Residues 1 to 195 form the ABC transporter domain; that stretch reads MLSLHQLQFN…IKSAQILQLV (195 aa). 33-40 is an ATP binding site; it reads GANGSGKS.

It belongs to the ABC transporter superfamily. CcmA exporter (TC 3.A.1.107) family. As to quaternary structure, the complex is composed of two ATP-binding proteins (CcmA) and two transmembrane proteins (CcmB).

The protein localises to the cell inner membrane. It carries out the reaction heme b(in) + ATP + H2O = heme b(out) + ADP + phosphate + H(+). Functionally, part of the ABC transporter complex CcmAB involved in the biogenesis of c-type cytochromes; once thought to export heme, this seems not to be the case, but its exact role is uncertain. Responsible for energy coupling to the transport system. This is Cytochrome c biogenesis ATP-binding export protein CcmA from Rickettsia felis (strain ATCC VR-1525 / URRWXCal2) (Rickettsia azadi).